Consider the following 421-residue polypeptide: 3-phosphoshikimate 1-carboxyvinyltransferase (421 aa).

Residues K19, S20, and R24 each coordinate 3-phosphoshikimate. K19 contacts phosphoenolpyruvate. Residues G88 and R116 each coordinate phosphoenolpyruvate. Residues S160, Q162, D307, and K334 each coordinate 3-phosphoshikimate. A phosphoenolpyruvate-binding site is contributed by Q162. The Proton acceptor role is filled by D307. R338 and R380 together coordinate phosphoenolpyruvate.

Belongs to the EPSP synthase family. As to quaternary structure, monomer.

It localises to the cytoplasm. It carries out the reaction 3-phosphoshikimate + phosphoenolpyruvate = 5-O-(1-carboxyvinyl)-3-phosphoshikimate + phosphate. Its pathway is metabolic intermediate biosynthesis; chorismate biosynthesis; chorismate from D-erythrose 4-phosphate and phosphoenolpyruvate: step 6/7. In terms of biological role, catalyzes the transfer of the enolpyruvyl moiety of phosphoenolpyruvate (PEP) to the 5-hydroxyl of shikimate-3-phosphate (S3P) to produce enolpyruvyl shikimate-3-phosphate and inorganic phosphate. In Thermotoga sp. (strain RQ2), this protein is 3-phosphoshikimate 1-carboxyvinyltransferase.